The primary structure comprises 471 residues: Tryptophanase (471 aa).

3 positions are modified to N6-acetyllysine: lysine 5, lysine 115, and lysine 156. Lysine 270 carries the N6-(pyridoxal phosphate)lysine modification. Lysine 450 is subject to N6-acetyllysine.

This sequence belongs to the beta-eliminating lyase family. As to quaternary structure, homotetramer. Pyridoxal 5'-phosphate is required as a cofactor.

The catalysed reaction is L-tryptophan + H2O = indole + pyruvate + NH4(+). The protein operates within amino-acid degradation; L-tryptophan degradation via pyruvate pathway; indole and pyruvate from L-tryptophan: step 1/1. The polypeptide is Tryptophanase (Escherichia coli O9:H4 (strain HS)).